A 202-amino-acid chain; its full sequence is Small ribosomal subunit protein uS4 (202 aa).

Positions 15–42 (LGDLPGLTRKAAKRSYPPGQHGQARRKR) are disordered. Positions 90-152 (NRLDNVCFRI…KCSKLLAEAN (63 aa)) constitute an S4 RNA-binding domain.

The protein belongs to the universal ribosomal protein uS4 family. In terms of assembly, part of the 30S ribosomal subunit. Contacts protein S5. The interaction surface between S4 and S5 is involved in control of translational fidelity.

One of the primary rRNA binding proteins, it binds directly to 16S rRNA where it nucleates assembly of the body of the 30S subunit. In terms of biological role, with S5 and S12 plays an important role in translational accuracy. In Synechococcus sp. (strain CC9311), this protein is Small ribosomal subunit protein uS4.